Here is a 204-residue protein sequence, read N- to C-terminus: Inactive ribonuclease-like protein 9 (204 aa).

The first 26 residues, methionine 1–phenylalanine 26, serve as a signal peptide directing secretion. Intrachain disulfides connect cysteine 97/cysteine 152, cysteine 115/cysteine 167, and cysteine 122/cysteine 129. N-linked (GlcNAc...) asparagine glycosylation is found at asparagine 130 and asparagine 142.

The protein belongs to the pancreatic ribonuclease family.

It is found in the secreted. In terms of biological role, does not exhibit any ribonuclease activity. In Papio anubis (Olive baboon), this protein is Inactive ribonuclease-like protein 9 (RNASE9).